Consider the following 688-residue polypeptide: Glycine--tRNA ligase beta subunit (688 aa).

This sequence belongs to the class-II aminoacyl-tRNA synthetase family. Tetramer of two alpha and two beta subunits.

Its subcellular location is the cytoplasm. The catalysed reaction is tRNA(Gly) + glycine + ATP = glycyl-tRNA(Gly) + AMP + diphosphate. The sequence is that of Glycine--tRNA ligase beta subunit from Listeria monocytogenes serotype 4b (strain CLIP80459).